We begin with the raw amino-acid sequence, 134 residues long: Ethylmalonyl-CoA/methylmalonyl-CoA epimerase (134 aa).

Residues 4-134 enclose the VOC domain; that stretch reads RLNHVAIAVP…NGCLVELEQV (131 aa). Residues H7, H79, and E130 each coordinate Co(2+). Residue E130 is the Proton donor/acceptor of the active site.

The protein belongs to the methylmalonyl-CoA epimerase family. Co(2+) is required as a cofactor. Requires Mn(2+) as cofactor.

It carries out the reaction (2R)-ethylmalonyl-CoA = (2S)-ethylmalonyl-CoA. The enzyme catalyses (R)-methylmalonyl-CoA = (S)-methylmalonyl-CoA. In terms of biological role, promiscuous isomerase that catalyzes epimerization of both ethylmalonyl-CoA and methylmalonyl-CoA. Has thus a dual role in the ethylmalonyl-CoA pathway for acetyl-CoA assimilation required for R.sphaeroides growth on acetate as sole carbon source. The protein is Ethylmalonyl-CoA/methylmalonyl-CoA epimerase of Cereibacter sphaeroides (strain ATCC 17023 / DSM 158 / JCM 6121 / CCUG 31486 / LMG 2827 / NBRC 12203 / NCIMB 8253 / ATH 2.4.1.) (Rhodobacter sphaeroides).